Here is an 89-residue protein sequence, read N- to C-terminus: Cell division topological specificity factor (89 aa).

It belongs to the MinE family.

In terms of biological role, prevents the cell division inhibition by proteins MinC and MinD at internal division sites while permitting inhibition at polar sites. This ensures cell division at the proper site by restricting the formation of a division septum at the midpoint of the long axis of the cell. This is Cell division topological specificity factor from Heliobacterium modesticaldum (strain ATCC 51547 / Ice1).